Consider the following 174-residue polypeptide: Endoribonuclease YbeY (174 aa).

Zn(2+) is bound by residues His-129, His-133, and His-139.

It belongs to the endoribonuclease YbeY family. Requires Zn(2+) as cofactor.

The protein resides in the cytoplasm. Functionally, single strand-specific metallo-endoribonuclease involved in late-stage 70S ribosome quality control and in maturation of the 3' terminus of the 16S rRNA. This chain is Endoribonuclease YbeY, found in Lactobacillus acidophilus (strain ATCC 700396 / NCK56 / N2 / NCFM).